The following is a 924-amino-acid chain: MPSTYSDDNTLRSGLDRFRDHSPSQHRRSMSQETDSTVSTTSIVFDRIQERLDTKEFPARGTDGDDNDSLKDELNNDDLETGPFLGNASPSSRSNQRSSADGQRMDRSLRRWLFIVSGALVATWVIGLIFFVSSKAYKPSSSFAHDPQATVTHGSGKKVTLDQVLNNEWRAKSHSISWIAGVNGEDGLLLEKEGANKDYLVVEDVRAQNPSSVEASKSKTLIKDKLFEFANKTYWPTVTVPSRDLKKVLLATDVQNNWRHSYYAVYWIFDVETQQAEPLVPYDADARLQLASWSPTSDAIVYTRDNNMFLRKLDSDKIVQITRDGSADVFNGVPDWVYEEEVLASGVATWWSEDGNYVAFLRTNETGVPEYPIQYFVSRPSGEEPKPGEENYPEVRQIKYPKAGAHNPIVDLKFYDVKRGDVFSVDISGRFADDDRLITEVIWAGKQVLIKETNRVSDVMRVVLVDVGSRTGKAVRTVDVNDIDGGWFEISHKTKFIPADPANGRPDDGYVDTIIHNNGDHLAYFTPLDNPNPIMLTSGDYEVVDAPSAVDLQRNLVYFVSTKESSIQRHVYQVKLTGEDMTPVTDTSKEGYYAISFSTGAGYALVSYQGPNIPWQKVISTPSNPDKYEHVVEENKDLAEAAKKHELPINIYGTINVDGVELNYIERRPPHFDKNKKYPVLFQQYSGPVSQTVKKTFAVDFQSFVAAGLGYICVTVDGRGTGFIGRKNRVIIRGNLGTWESHDQIAAAKHWAQKDYIDEDRLAIWGWSYGGYMTLKTLEQDAGQTFKYGMAVAPVTDWRFYDSIYTERYMRTPQTNPEGYESAAVTNVTALSQNVRFLLMHGVADDNVHMQNSLTLLDALDQRSVENYDVQVFPDSDHGIYFHNANRIVFDKLTNWLVNAFNGEWLKIANAQPNGMKRRALPTA.

Polar residues predominate over residues methionine 1 to arginine 12. A disordered region spans residues methionine 1–glycine 102. At methionine 1 to arginine 111 the chain is on the cytoplasmic side. Positions glycine 14 to proline 23 are enriched in basic and acidic residues. Residues serine 31–isoleucine 43 show a composition bias toward polar residues. Basic and acidic residues predominate over residues arginine 47–proline 58. Low complexity predominate over residues asparagine 87–alanine 100. The helical; Signal-anchor for type II membrane protein transmembrane segment at tryptophan 112–valine 132 threads the bilayer. The Vacuolar segment spans residues serine 133–alanine 924. N-linked (GlcNAc...) asparagine glycosylation is found at asparagine 231 and asparagine 364. The Charge relay system role is filled by serine 768. An N-linked (GlcNAc...) asparagine glycan is attached at asparagine 827. Catalysis depends on charge relay system residues aspartate 845 and histidine 878.

The protein belongs to the peptidase S9B family.

The protein resides in the vacuole membrane. It catalyses the reaction Release of an N-terminal dipeptide, Xaa-Yaa-|-Zaa-, from a polypeptide, preferentially when Yaa is Pro, provided Zaa is neither Pro nor hydroxyproline.. In terms of biological role, type IV dipeptidyl-peptidase which removes N-terminal dipeptides sequentially from polypeptides having unsubstituted N-termini provided that the penultimate residue is proline. This chain is Probable dipeptidyl-aminopeptidase B (dapB), found in Neurospora crassa (strain ATCC 24698 / 74-OR23-1A / CBS 708.71 / DSM 1257 / FGSC 987).